The chain runs to 270 residues: 3-methyl-2-oxobutanoate hydroxymethyltransferase (270 aa).

Positions 50 and 89 each coordinate Mg(2+). Residues 50–51, Asp-89, and Lys-118 each bind 3-methyl-2-oxobutanoate; that span reads DS. Residue Glu-120 coordinates Mg(2+). The active-site Proton acceptor is Glu-187.

The protein belongs to the PanB family. In terms of assembly, homodecamer; pentamer of dimers. The cofactor is Mg(2+).

Its subcellular location is the cytoplasm. It catalyses the reaction 3-methyl-2-oxobutanoate + (6R)-5,10-methylene-5,6,7,8-tetrahydrofolate + H2O = 2-dehydropantoate + (6S)-5,6,7,8-tetrahydrofolate. It participates in cofactor biosynthesis; (R)-pantothenate biosynthesis; (R)-pantoate from 3-methyl-2-oxobutanoate: step 1/2. Functionally, catalyzes the reversible reaction in which hydroxymethyl group from 5,10-methylenetetrahydrofolate is transferred onto alpha-ketoisovalerate to form ketopantoate. In Helicobacter pylori (strain HPAG1), this protein is 3-methyl-2-oxobutanoate hydroxymethyltransferase.